A 333-amino-acid chain; its full sequence is Ketol-acid reductoisomerase (NADP(+)) (333 aa).

A KARI N-terminal Rossmann domain is found at 1-171 (MSNDTQPKIA…GGARANIIKT (171 aa)). NADP(+) contacts are provided by residues 14 to 17 (YGSQ), Arg-37, Thr-42, and 72 to 75 (DMVQ). The active site involves His-97. Gly-123 contacts NADP(+). The 146-residue stretch at 172-317 (TFKEETETDL…KKLRAKMVWL (146 aa)) folds into the KARI C-terminal knotted domain. Mg(2+) is bound by residues Asp-180, Glu-184, Glu-216, and Glu-220. Ser-241 is a binding site for substrate.

It belongs to the ketol-acid reductoisomerase family. It depends on Mg(2+) as a cofactor.

It carries out the reaction (2R)-2,3-dihydroxy-3-methylbutanoate + NADP(+) = (2S)-2-acetolactate + NADPH + H(+). The enzyme catalyses (2R,3R)-2,3-dihydroxy-3-methylpentanoate + NADP(+) = (S)-2-ethyl-2-hydroxy-3-oxobutanoate + NADPH + H(+). Its pathway is amino-acid biosynthesis; L-isoleucine biosynthesis; L-isoleucine from 2-oxobutanoate: step 2/4. It functions in the pathway amino-acid biosynthesis; L-valine biosynthesis; L-valine from pyruvate: step 2/4. Its function is as follows. Involved in the biosynthesis of branched-chain amino acids (BCAA). Catalyzes an alkyl-migration followed by a ketol-acid reduction of (S)-2-acetolactate (S2AL) to yield (R)-2,3-dihydroxy-isovalerate. In the isomerase reaction, S2AL is rearranged via a Mg-dependent methyl migration to produce 3-hydroxy-3-methyl-2-ketobutyrate (HMKB). In the reductase reaction, this 2-ketoacid undergoes a metal-dependent reduction by NADPH to yield (R)-2,3-dihydroxy-isovalerate. The sequence is that of Ketol-acid reductoisomerase (NADP(+)) from Xanthomonas oryzae pv. oryzae (strain MAFF 311018).